Reading from the N-terminus, the 396-residue chain is MAEKAHYERTKPHVNIGTIGHVDHGKTTLTAAITKMLADKGLAEAQDYANIDAAPEERERGITINTAHVEYETENRHYAHIDAPGHADYVKNMITGAAQMDGAILVVAATDGPMPQTREHILLAHQVGVDYIIVFLNKTDLVDDDELTDLVEMEVRELLSEYDFPGDDIPVIRGSALGALNGNPDDVKAVEELMATVDEYVPTPERDTDKPFLMPVEDVFTITGRGTVASGRIDRGQVTVGDEVEIIGLKEEIAKTTVTGLEMFRKTLDQGQAGDNIGALLRGIDRESIERGQVLAKPGSIQTHKNFKGEVYILSKDEGGRHTPFFSNYRPQFFFHTTDVTGVIELPEGVEMVMPGDNVTFTVELISPVAIEKGLKFTVREGGRTVGAGVVSEIID.

Residues 11-205 (KPHVNIGTIG…TVDEYVPTPE (195 aa)) enclose the tr-type G domain. The segment at 20 to 27 (GHVDHGKT) is G1. 20–27 (GHVDHGKT) serves as a coordination point for GTP. Thr-27 is a Mg(2+) binding site. A G2 region spans residues 61–65 (GITIN). Positions 82 to 85 (DAPG) are G3. GTP is bound by residues 82–86 (DAPGH) and 137–140 (NKTD). The tract at residues 137–140 (NKTD) is G4. The interval 175–177 (SAL) is G5.

Belongs to the TRAFAC class translation factor GTPase superfamily. Classic translation factor GTPase family. EF-Tu/EF-1A subfamily. Monomer.

It is found in the cytoplasm. The catalysed reaction is GTP + H2O = GDP + phosphate + H(+). Functionally, GTP hydrolase that promotes the GTP-dependent binding of aminoacyl-tRNA to the A-site of ribosomes during protein biosynthesis. This chain is Elongation factor Tu, found in Latilactobacillus sakei subsp. sakei (strain 23K) (Lactobacillus sakei subsp. sakei).